The sequence spans 378 residues: Chaperone protein DnaJ 2 (378 aa).

The J domain maps to 4-68 (DYYAVLGVRR…QKKQVYDLGG (65 aa)). The segment at 130-212 (GTTKDIQVDT…CAGDGRVRSR (83 aa)) adopts a CR-type zinc-finger fold. Zn(2+)-binding residues include C143, C146, C160, C163, C186, C189, C200, and C203. 4 CXXCXGXG motif repeats span residues 143–150 (CNTCNGEG), 160–167 (CDMCRGRG), 186–193 (CPQCQGFG), and 200–207 (CPECAGDG). 2 disordered regions span residues 297–319 (RPGT…LRGG) and 351–378 (RGEE…FNGR). Over residues 358-367 (GQFQPGQQGL) the composition is skewed to polar residues.

It belongs to the DnaJ family. Homodimer. Requires Zn(2+) as cofactor.

The protein resides in the cytoplasm. In terms of biological role, participates actively in the response to hyperosmotic and heat shock by preventing the aggregation of stress-denatured proteins and by disaggregating proteins, also in an autonomous, DnaK-independent fashion. Unfolded proteins bind initially to DnaJ; upon interaction with the DnaJ-bound protein, DnaK hydrolyzes its bound ATP, resulting in the formation of a stable complex. GrpE releases ADP from DnaK; ATP binding to DnaK triggers the release of the substrate protein, thus completing the reaction cycle. Several rounds of ATP-dependent interactions between DnaJ, DnaK and GrpE are required for fully efficient folding. Also involved, together with DnaK and GrpE, in the DNA replication of plasmids through activation of initiation proteins. The protein is Chaperone protein DnaJ 2 of Streptomyces coelicolor (strain ATCC BAA-471 / A3(2) / M145).